An 895-amino-acid chain; its full sequence is Catenin alpha-3 (895 aa).

Ser56 is subject to Phosphoserine. Positions 74–111 (EKIAQEATVLKDELTASLEEVRKESEALKVSAERFTDD) form a coiled coil. The residue at position 160 (Ser160) is a Phosphoserine. Positions 325 to 379 (RERIIAECNAIRQALQDLLSEYMNNAGKKERSNTLNIALDNMCKKTRDLRRQLRK) form a coiled coil. A phosphoserine mark is found at Ser637 and Ser647. Position 649 is a phosphothreonine (Thr649).

It belongs to the vinculin/alpha-catenin family. Interacts with CTNNB1. Interacts with PKP2. As to expression, predominantly expressed in heart and testis. Expressed at lower levels in brain, kidney, liver and skeletal muscle.

It localises to the cytoplasm. It is found in the cytoskeleton. The protein resides in the cell junction. Its subcellular location is the desmosome. In terms of biological role, may be involved in formation of stretch-resistant cell-cell adhesion complexes. The protein is Catenin alpha-3 of Homo sapiens (Human).